The sequence spans 419 residues: L-rhamnose isomerase (419 aa).

3 residues coordinate Mn(2+): H262, D294, and D296.

It belongs to the rhamnose isomerase family. In terms of assembly, homotetramer. Mn(2+) is required as a cofactor.

It is found in the cytoplasm. The catalysed reaction is L-rhamnopyranose = L-rhamnulose. The protein operates within carbohydrate degradation; L-rhamnose degradation; glycerone phosphate from L-rhamnose: step 1/3. Its function is as follows. Catalyzes the interconversion of L-rhamnose and L-rhamnulose. This Escherichia coli (strain K12 / MC4100 / BW2952) protein is L-rhamnose isomerase.